The following is a 420-amino-acid chain: Aminoacyltransferase FemA (420 aa).

It belongs to the FemABX family. Homodimer. Interacts with FemB.

It is found in the cytoplasm. It carries out the reaction beta-D-GlcNAc-(1-&gt;4)-Mur2Ac(oyl-L-Ala-D-isoglutaminyl-L-Lys-(N(6)-Gly)-D-Ala-D-Ala)-di-trans,octa-cis-undecaprenyl diphosphate + 2 glycyl-tRNA(Gly) = MurNAc-L-Ala-D-isoglutaminyl-L-Lys-(N(6)-tri-Gly)-D-Ala-D-Ala-diphospho-di-trans,octa-cis-undecaprenyl-GlcNAc + 2 tRNA(Gly) + 2 H(+). Catalyzes the formation of the pentaglycine interpeptide bridge, which is characteristic of the S.aureus peptidoglycan. Adds glycines 2 and 3 of the pentaglycine bridge, using glycyl-tRNA(Gly) as donor. Involved in resistance to methicillin. This chain is Aminoacyltransferase FemA (femA), found in Staphylococcus aureus (strain Mu50 / ATCC 700699).